Consider the following 132-residue polypeptide: Small ribosomal subunit protein uS8 (132 aa).

Belongs to the universal ribosomal protein uS8 family. As to quaternary structure, part of the 30S ribosomal subunit. Contacts proteins S5 and S12.

In terms of biological role, one of the primary rRNA binding proteins, it binds directly to 16S rRNA central domain where it helps coordinate assembly of the platform of the 30S subunit. The polypeptide is Small ribosomal subunit protein uS8 (Staphylococcus haemolyticus (strain JCSC1435)).